Consider the following 328-residue polypeptide: Biotin synthase (328 aa).

Positions 48 to 275 (NRIQLSKLLN…KSHVRLTAGR (228 aa)) constitute a Radical SAM core domain. [4Fe-4S] cluster-binding residues include Cys-63, Cys-67, and Cys-70. Cys-107, Cys-138, Cys-198, and Arg-270 together coordinate [2Fe-2S] cluster.

The protein belongs to the radical SAM superfamily. Biotin synthase family. Homodimer. [4Fe-4S] cluster serves as cofactor. [2Fe-2S] cluster is required as a cofactor.

It carries out the reaction (4R,5S)-dethiobiotin + (sulfur carrier)-SH + 2 reduced [2Fe-2S]-[ferredoxin] + 2 S-adenosyl-L-methionine = (sulfur carrier)-H + biotin + 2 5'-deoxyadenosine + 2 L-methionine + 2 oxidized [2Fe-2S]-[ferredoxin]. It participates in cofactor biosynthesis; biotin biosynthesis; biotin from 7,8-diaminononanoate: step 2/2. Its function is as follows. Catalyzes the conversion of dethiobiotin (DTB) to biotin by the insertion of a sulfur atom into dethiobiotin via a radical-based mechanism. The polypeptide is Biotin synthase (Brucella ovis (strain ATCC 25840 / 63/290 / NCTC 10512)).